Consider the following 273-residue polypeptide: Octanoyltransferase LipM (273 aa).

Residues 32-240 (GEIPPTLRFY…GFSEILNIEL (209 aa)) form the BPL/LPL catalytic domain. C142 functions as the Acyl-thioester intermediate in the catalytic mechanism.

The protein belongs to the octanoyltransferase LipM family. Monomer.

The catalysed reaction is octanoyl-[ACP] + L-lysyl-[protein] = N(6)-octanoyl-L-lysyl-[protein] + holo-[ACP] + H(+). It functions in the pathway protein modification; protein lipoylation via endogenous pathway; protein N(6)-(lipoyl)lysine from octanoyl-[acyl-carrier-protein]. Catalyzes the transfer of endogenously produced octanoic acid from octanoyl-acyl-carrier-protein onto the lipoyl domain of GcvH, an intermediate carrier during protein lipoylation. The sequence is that of Octanoyltransferase LipM from Oceanobacillus iheyensis (strain DSM 14371 / CIP 107618 / JCM 11309 / KCTC 3954 / HTE831).